Here is a 220-residue protein sequence, read N- to C-terminus: Dual specificity protein phosphatase 19 (220 aa).

Methionine 1 carries the N-acetylmethionine modification. A Tyrosine-protein phosphatase domain is found at glutamine 64–serine 205. Cysteine 149 (phosphocysteine intermediate) is an active-site residue.

Belongs to the protein-tyrosine phosphatase family. Non-receptor class dual specificity subfamily.

It catalyses the reaction O-phospho-L-tyrosyl-[protein] + H2O = L-tyrosyl-[protein] + phosphate. It carries out the reaction O-phospho-L-seryl-[protein] + H2O = L-seryl-[protein] + phosphate. The catalysed reaction is O-phospho-L-threonyl-[protein] + H2O = L-threonyl-[protein] + phosphate. With respect to regulation, phosphatase activity is enhanced by Ca(2+) and Mn(2+). Functionally, has a dual specificity toward Ser/Thr and Tyr-containing proteins. The sequence is that of Dual specificity protein phosphatase 19 from Mus musculus (Mouse).